A 277-amino-acid polypeptide reads, in one-letter code: MTDTRDHIISQLSVVPSIEPAAEVEARVQFLVDYLRVSHARGYVLGISGGQDSTIAGRLAQLAVERIRREDGSDHQFVGVRLPHGLQADEDDALVALDFIQPDRSISINIREATDVLSAATAAALGIDELGDFNKGNVKARQRMVAQYAIAGELGLLVVGTDHAAENVTGFFTKYGDGAADVLPLAGLTKRQGALLLQHLGAPESTWTKVPTADLEEDRPALPDEEALGVTYREIDTYLENSGEVSPEAAARIEHLWKVGQHKRHMPVTPQDQWWRQ.

46 to 53 lines the ATP pocket; that stretch reads GISGGQDS. D52 contributes to the Mg(2+) binding site. Position 141 (R141) interacts with deamido-NAD(+). T161 is an ATP binding site. Residue E166 participates in Mg(2+) binding. Residues K174 and D181 each coordinate deamido-NAD(+). ATP is bound by residues K190 and T212. 262–263 lines the deamido-NAD(+) pocket; sequence HK.

It belongs to the NAD synthetase family. Homodimer.

The catalysed reaction is deamido-NAD(+) + NH4(+) + ATP = AMP + diphosphate + NAD(+) + H(+). It participates in cofactor biosynthesis; NAD(+) biosynthesis; NAD(+) from deamido-NAD(+) (ammonia route): step 1/1. Functionally, catalyzes the ATP-dependent amidation of deamido-NAD to form NAD. Uses ammonia as a nitrogen source. The sequence is that of NH(3)-dependent NAD(+) synthetase from Corynebacterium efficiens (strain DSM 44549 / YS-314 / AJ 12310 / JCM 11189 / NBRC 100395).